The sequence spans 235 residues: DNA repair protein RecO (235 aa).

This sequence belongs to the RecO family.

Functionally, involved in DNA repair and RecF pathway recombination. This Enterobacter sp. (strain 638) protein is DNA repair protein RecO.